A 597-amino-acid chain; its full sequence is Glutamine--fructose-6-phosphate aminotransferase [isomerizing] (597 aa).

C2 serves as the catalytic Nucleophile; for GATase activity. The region spanning C2–E218 is the Glutamine amidotransferase type-2 domain. SIS domains follow at residues I276 to T416 and L449 to P587. Residue K592 is the For Fru-6P isomerization activity of the active site.

As to quaternary structure, homodimer.

The protein localises to the cytoplasm. The enzyme catalyses D-fructose 6-phosphate + L-glutamine = D-glucosamine 6-phosphate + L-glutamate. In terms of biological role, catalyzes the first step in hexosamine metabolism, converting fructose-6P into glucosamine-6P using glutamine as a nitrogen source. The chain is Glutamine--fructose-6-phosphate aminotransferase [isomerizing] from Helicobacter pylori (strain J99 / ATCC 700824) (Campylobacter pylori J99).